The primary structure comprises 273 residues: 4-hydroxy-tetrahydrodipicolinate reductase (273 aa).

Residues 12-17 (GAGGRM) and Glu38 contribute to the NAD(+) site. Arg39 lines the NADP(+) pocket. NAD(+)-binding positions include 102 to 104 (GTT) and 126 to 129 (AANF). His159 (proton donor/acceptor) is an active-site residue. His160 provides a ligand contact to (S)-2,3,4,5-tetrahydrodipicolinate. The Proton donor role is filled by Lys163. Residue 169–170 (GT) coordinates (S)-2,3,4,5-tetrahydrodipicolinate.

This sequence belongs to the DapB family. In terms of assembly, homotetramer.

Its subcellular location is the cytoplasm. It catalyses the reaction (S)-2,3,4,5-tetrahydrodipicolinate + NAD(+) + H2O = (2S,4S)-4-hydroxy-2,3,4,5-tetrahydrodipicolinate + NADH + H(+). It carries out the reaction (S)-2,3,4,5-tetrahydrodipicolinate + NADP(+) + H2O = (2S,4S)-4-hydroxy-2,3,4,5-tetrahydrodipicolinate + NADPH + H(+). The protein operates within amino-acid biosynthesis; L-lysine biosynthesis via DAP pathway; (S)-tetrahydrodipicolinate from L-aspartate: step 4/4. Its function is as follows. Catalyzes the conversion of 4-hydroxy-tetrahydrodipicolinate (HTPA) to tetrahydrodipicolinate. This Photorhabdus laumondii subsp. laumondii (strain DSM 15139 / CIP 105565 / TT01) (Photorhabdus luminescens subsp. laumondii) protein is 4-hydroxy-tetrahydrodipicolinate reductase.